The following is a 116-amino-acid chain: MSKLKKRKGDEGESIASNFLISLDHEILKRNYRFLHCEIDIISVKEEVLYFSEVKFWKEFKFFDPRFTFNLAKQTKMRKAAKGFLAENLSFQNHFVSFCLVSVNEKKGCKYYLDLF.

The protein belongs to the UPF0102 family.

This is UPF0102 protein LA_2381 from Leptospira interrogans serogroup Icterohaemorrhagiae serovar Lai (strain 56601).